The sequence spans 265 residues: 3-deoxy-manno-octulosonate cytidylyltransferase (265 aa).

Belongs to the KdsB family.

It localises to the cytoplasm. The catalysed reaction is 3-deoxy-alpha-D-manno-oct-2-ulosonate + CTP = CMP-3-deoxy-beta-D-manno-octulosonate + diphosphate. The protein operates within nucleotide-sugar biosynthesis; CMP-3-deoxy-D-manno-octulosonate biosynthesis; CMP-3-deoxy-D-manno-octulosonate from 3-deoxy-D-manno-octulosonate and CTP: step 1/1. It participates in bacterial outer membrane biogenesis; lipopolysaccharide biosynthesis. Functionally, activates KDO (a required 8-carbon sugar) for incorporation into bacterial lipopolysaccharide in Gram-negative bacteria. The protein is 3-deoxy-manno-octulosonate cytidylyltransferase of Delftia acidovorans (strain DSM 14801 / SPH-1).